A 63-amino-acid polypeptide reads, in one-letter code: Large ribosomal subunit protein bL28 (63 aa).

This sequence belongs to the bacterial ribosomal protein bL28 family.

The protein is Large ribosomal subunit protein bL28 of Hydrogenobaculum sp. (strain Y04AAS1).